A 147-amino-acid chain; its full sequence is Hemoglobin subunit epsilon (147 aa).

One can recognise a Globin domain in the interval 3–147; the sequence is HFTAEEKSTI…VATALAHKYH (145 aa). Phosphoserine occurs at positions 14 and 51. Heme b-binding residues include histidine 64 and histidine 93.

Belongs to the globin family. As to quaternary structure, heterotetramer of two alpha chains and two epsilon chains in early embryonic hemoglobin Gower-2; two zeta chains and two epsilon chains in early embryonic hemoglobin Gower-1. As to expression, red blood cells.

The epsilon chain is a beta-type chain of early mammalian embryonic hemoglobin. The chain is Hemoglobin subunit epsilon (HBE1) from Cheirogaleus medius (Fat-tailed dwarf lemur).